A 602-amino-acid polypeptide reads, in one-letter code: Elongation factor 4 (602 aa).

The tr-type G domain occupies 7–189 (RKIRNFSIIA…AIVKNIPPPT (183 aa)). GTP-binding positions include 19–24 (DHGKST) and 136–139 (NKID).

It belongs to the TRAFAC class translation factor GTPase superfamily. Classic translation factor GTPase family. LepA subfamily.

The protein localises to the cell membrane. It carries out the reaction GTP + H2O = GDP + phosphate + H(+). Required for accurate and efficient protein synthesis under certain stress conditions. May act as a fidelity factor of the translation reaction, by catalyzing a one-codon backward translocation of tRNAs on improperly translocated ribosomes. Back-translocation proceeds from a post-translocation (POST) complex to a pre-translocation (PRE) complex, thus giving elongation factor G a second chance to translocate the tRNAs correctly. Binds to ribosomes in a GTP-dependent manner. The sequence is that of Elongation factor 4 from Alkaliphilus metalliredigens (strain QYMF).